A 505-amino-acid polypeptide reads, in one-letter code: Apolipoprotein N-acyltransferase (505 aa).

Transmembrane regions (helical) follow at residues 6-26 (PSILVACILSFCLGAIGCLAF), 29-49 (FDIWLIAYLSAAGLIWAATLV), 53-73 (TAMLATFAWSIGYFGVGVQWV), 80-100 (FGGVPVIVSYLAVLLLASYLG), 119-139 (FVLASLFTFTEYLRGVVFTGF), 152-172 (PFAQLAPIFGVEGLTFLVILL), and 189-209 (TFTKIAVIIGFSLASNLLQFV). Residues 223–469 (IQANIEQQLK…TNTLTAEIAT (247 aa)) form the CN hydrolase domain. Residue glutamate 263 is the Proton acceptor of the active site. Lysine 328 is a catalytic residue. Catalysis depends on cysteine 379, which acts as the Nucleophile. The helical transmembrane segment at 475–495 (LFGQFGHWLIYSLSFICVAFG) threads the bilayer.

This sequence belongs to the CN hydrolase family. Apolipoprotein N-acyltransferase subfamily.

Its subcellular location is the cell inner membrane. The enzyme catalyses N-terminal S-1,2-diacyl-sn-glyceryl-L-cysteinyl-[lipoprotein] + a glycerophospholipid = N-acyl-S-1,2-diacyl-sn-glyceryl-L-cysteinyl-[lipoprotein] + a 2-acyl-sn-glycero-3-phospholipid + H(+). The protein operates within protein modification; lipoprotein biosynthesis (N-acyl transfer). Catalyzes the phospholipid dependent N-acylation of the N-terminal cysteine of apolipoprotein, the last step in lipoprotein maturation. The protein is Apolipoprotein N-acyltransferase of Haemophilus ducreyi (strain 35000HP / ATCC 700724).